The primary structure comprises 55 residues: Neurotoxin B-IV (55 aa).

Proline 10 bears the Hydroxyproline mark. Intrachain disulfides connect cysteine 12-cysteine 52, cysteine 16-cysteine 48, cysteine 23-cysteine 41, and cysteine 26-cysteine 37.

This sequence belongs to the worm B-toxin family.

It is found in the secreted. In terms of biological role, this toxin increases the excitability of nerves by delaying the inactivation of the voltage-gated sodium channel (Nav). Only acts on some crustacean. Is more abundant, but 15-fold less toxic than neurotoxin B-II. The sequence is that of Neurotoxin B-IV from Cerebratulus lacteus (Milky ribbon worm).